Consider the following 559-residue polypeptide: Paxillin (559 aa).

Positions 3–15 (DLDALLADLESTT) match the LD motif 1 motif. The tract at residues 17–139 (HISKRPVFLT…SPTMTSTSLG (123 aa)) is disordered. Phosphotyrosine is present on Y31. Positions 45 to 54 (VPPPVPPPPS) are enriched in pro residues. Positions 79–98 (QQPQSQSPIYSSSAKSSSAS) are enriched in low complexity. Phosphotyrosine; by FAK1 is present on Y118. Residues 121–137 (PNKQKSAEPSPTMTSTS) show a composition bias toward polar residues. The short motif at 144-156 (ELDRLLLELNAVQ) is the LD motif 2 element. Disordered stretches follow at residues 158–213 (NPPS…GIED) and 225–262 (LESSVPSPVPAITVSQGEVSSPQRVNASQQQTRISASS). An LD motif 3 motif is present at residues 217–229 (SVESLLDELESSV). The span at 237–262 (TVSQGEVSSPQRVNASQQQTRISASS) shows a compositional bias: polar residues. The tract at residues 263–282 (ATRELDELMASLSDFKFMAQ) is required for binding to PARVA and ILK. 2 consecutive short sequence motifs (LD motif) follow at residues 266–277 (ELDELMASLSDF) and 301–313 (QLDTMLGSLQSDL). The disordered stretch occupies residues 281 to 301 (AQGKAGGSSSPPSTTPKPGSQ). LIM zinc-binding domains follow at residues 326–376 (CGAC…CEKD), 385–435 (CYYC…CRKD), 444–494 (CGGC…CEVH), and 503–553 (CSGC…CQNC).

As to quaternary structure, interacts (via LD motif 4) with PARVA/PARVIN and ILK. Phosphorylated on tyrosine residues during integrin-mediated cell adhesion, embryonic development, fibroblast transformation and following stimulation of cells by mitogens.

It is found in the cytoplasm. The protein localises to the cytoskeleton. Its subcellular location is the cell junction. The protein resides in the focal adhesion. It localises to the cell cortex. In terms of biological role, cytoskeletal protein involved in actin-membrane attachment at sites of cell adhesion to the extracellular matrix (focal adhesion). Binds in vitro to vinculin as well as to the SH3 domain of c-SRC and, when tyrosine phosphorylated, to the SH2 domain of v-CRK. The polypeptide is Paxillin (PXN) (Gallus gallus (Chicken)).